Reading from the N-terminus, the 359-residue chain is Peptide chain release factor 1 (359 aa).

At Gln-232 the chain carries N5-methylglutamine.

Belongs to the prokaryotic/mitochondrial release factor family. Methylated by PrmC. Methylation increases the termination efficiency of RF1.

The protein resides in the cytoplasm. Functionally, peptide chain release factor 1 directs the termination of translation in response to the peptide chain termination codons UAG and UAA. The polypeptide is Peptide chain release factor 1 (Lawsonia intracellularis (strain PHE/MN1-00)).